Reading from the N-terminus, the 576-residue chain is Dihydroxy-acid dehydratase (576 aa).

Cys-56 serves as a coordination point for [2Fe-2S] cluster. A Mg(2+)-binding site is contributed by Asp-88. Cys-129 lines the [2Fe-2S] cluster pocket. Mg(2+) contacts are provided by Asp-130 and Lys-131. At Lys-131 the chain carries N6-carboxylysine. A [2Fe-2S] cluster-binding site is contributed by Cys-201. Glu-453 serves as a coordination point for Mg(2+). Ser-479 (proton acceptor) is an active-site residue.

The protein belongs to the IlvD/Edd family. As to quaternary structure, homodimer. [2Fe-2S] cluster is required as a cofactor. It depends on Mg(2+) as a cofactor.

The enzyme catalyses (2R)-2,3-dihydroxy-3-methylbutanoate = 3-methyl-2-oxobutanoate + H2O. It carries out the reaction (2R,3R)-2,3-dihydroxy-3-methylpentanoate = (S)-3-methyl-2-oxopentanoate + H2O. It functions in the pathway amino-acid biosynthesis; L-isoleucine biosynthesis; L-isoleucine from 2-oxobutanoate: step 3/4. It participates in amino-acid biosynthesis; L-valine biosynthesis; L-valine from pyruvate: step 3/4. In terms of biological role, functions in the biosynthesis of branched-chain amino acids. Catalyzes the dehydration of (2R,3R)-2,3-dihydroxy-3-methylpentanoate (2,3-dihydroxy-3-methylvalerate) into 2-oxo-3-methylpentanoate (2-oxo-3-methylvalerate) and of (2R)-2,3-dihydroxy-3-methylbutanoate (2,3-dihydroxyisovalerate) into 2-oxo-3-methylbutanoate (2-oxoisovalerate), the penultimate precursor to L-isoleucine and L-valine, respectively. This is Dihydroxy-acid dehydratase from Parvibaculum lavamentivorans (strain DS-1 / DSM 13023 / NCIMB 13966).